Here is a 496-residue protein sequence, read N- to C-terminus: Chromosomal replication initiator protein DnaA (496 aa).

The interval 1-76 is domain I, interacts with DnaA modulators; that stretch reads MKMDSAVSEE…TELWQEENPQ (76 aa). Residues 76–150 are domain II; that stretch reads QILKVEVVVR…AAATGAVLGS (75 aa). A domain III, AAA+ region region spans residues 151 to 373; the sequence is PLDPRYTFDT…GAFNQLLFRQ (223 aa). Residues glycine 197, glycine 199, lysine 200, and threonine 201 each contribute to the ATP site. The segment at 374 to 496 is domain IV, binds dsDNA; the sequence is SFEPNISIDR…LKRLINDQAA (123 aa).

Belongs to the DnaA family. Oligomerizes as a right-handed, spiral filament on DNA at oriC.

The protein resides in the cytoplasm. Functionally, plays an essential role in the initiation and regulation of chromosomal replication. ATP-DnaA binds to the origin of replication (oriC) to initiate formation of the DNA replication initiation complex once per cell cycle. Binds the DnaA box (a 9 base pair repeat at the origin) and separates the double-stranded (ds)DNA. Forms a right-handed helical filament on oriC DNA; dsDNA binds to the exterior of the filament while single-stranded (ss)DNA is stabiized in the filament's interior. The ATP-DnaA-oriC complex binds and stabilizes one strand of the AT-rich DNA unwinding element (DUE), permitting loading of DNA polymerase. After initiation quickly degrades to an ADP-DnaA complex that is not apt for DNA replication. Binds acidic phospholipids. This chain is Chromosomal replication initiator protein DnaA, found in Brucella abortus biovar 1 (strain 9-941).